The following is a 660-amino-acid chain: Bifunctional polymyxin resistance protein ArnA (660 aa).

Residues 1–304 form a formyltransferase ArnAFT region; that stretch reads MKTVVFAYHD…TLGLVQGSRL (304 aa). 86–88 contributes to the (6R)-10-formyltetrahydrofolate binding site; it reads HLI. The active-site Proton donor; for formyltransferase activity is the His-104. Residues Arg-114 and 136 to 140 contribute to the (6R)-10-formyltetrahydrofolate site; that span reads VKRAD. A dehydrogenase ArnADH region spans residues 314–660; it reads RRTRVLILGV…RTVDLTDKPS (347 aa). Residues Asp-347 and 368-369 contribute to the NAD(+) site; that span reads DI. Residues Ala-393, Tyr-398, and 432–433 contribute to the UDP-alpha-D-glucuronate site; that span reads TS. Catalysis depends on Glu-434, which acts as the Proton acceptor; for decarboxylase activity. UDP-alpha-D-glucuronate contacts are provided by residues Arg-460, Asn-492, 526–535, and Tyr-613; that span reads KLIDGGKQKR. Arg-619 functions as the Proton donor; for decarboxylase activity in the catalytic mechanism.

In the N-terminal section; belongs to the Fmt family. UDP-L-Ara4N formyltransferase subfamily. It in the C-terminal section; belongs to the NAD(P)-dependent epimerase/dehydratase family. UDP-glucuronic acid decarboxylase subfamily. Homohexamer, formed by a dimer of trimers.

It catalyses the reaction UDP-alpha-D-glucuronate + NAD(+) = UDP-beta-L-threo-pentopyranos-4-ulose + CO2 + NADH. The enzyme catalyses UDP-4-amino-4-deoxy-beta-L-arabinose + (6R)-10-formyltetrahydrofolate = UDP-4-deoxy-4-formamido-beta-L-arabinose + (6S)-5,6,7,8-tetrahydrofolate + H(+). The protein operates within nucleotide-sugar biosynthesis; UDP-4-deoxy-4-formamido-beta-L-arabinose biosynthesis; UDP-4-deoxy-4-formamido-beta-L-arabinose from UDP-alpha-D-glucuronate: step 1/3. It participates in nucleotide-sugar biosynthesis; UDP-4-deoxy-4-formamido-beta-L-arabinose biosynthesis; UDP-4-deoxy-4-formamido-beta-L-arabinose from UDP-alpha-D-glucuronate: step 3/3. It functions in the pathway bacterial outer membrane biogenesis; lipopolysaccharide biosynthesis. Its function is as follows. Bifunctional enzyme that catalyzes the oxidative decarboxylation of UDP-glucuronic acid (UDP-GlcUA) to UDP-4-keto-arabinose (UDP-Ara4O) and the addition of a formyl group to UDP-4-amino-4-deoxy-L-arabinose (UDP-L-Ara4N) to form UDP-L-4-formamido-arabinose (UDP-L-Ara4FN). The modified arabinose is attached to lipid A and is required for resistance to polymyxin and cationic antimicrobial peptides. The chain is Bifunctional polymyxin resistance protein ArnA from Escherichia coli O6:H1 (strain CFT073 / ATCC 700928 / UPEC).